The sequence spans 383 residues: 3-dehydroquinate synthase (383 aa).

NAD(+) is bound by residues glutamate 81–lysine 86, glycine 115–aspartate 119, threonine 139–serine 140, lysine 152, and lysine 161. Zn(2+)-binding residues include glutamate 194, histidine 256, and histidine 274.

Belongs to the sugar phosphate cyclases superfamily. Dehydroquinate synthase family. Co(2+) serves as cofactor. The cofactor is Zn(2+). Requires NAD(+) as cofactor.

The protein resides in the cytoplasm. The enzyme catalyses 7-phospho-2-dehydro-3-deoxy-D-arabino-heptonate = 3-dehydroquinate + phosphate. It participates in metabolic intermediate biosynthesis; chorismate biosynthesis; chorismate from D-erythrose 4-phosphate and phosphoenolpyruvate: step 2/7. Its function is as follows. Catalyzes the conversion of 3-deoxy-D-arabino-heptulosonate 7-phosphate (DAHP) to dehydroquinate (DHQ). The polypeptide is 3-dehydroquinate synthase (Nitrobacter winogradskyi (strain ATCC 25391 / DSM 10237 / CIP 104748 / NCIMB 11846 / Nb-255)).